The chain runs to 289 residues: 4-hydroxy-tetrahydrodipicolinate synthase (289 aa).

Position 43 (threonine 43) interacts with pyruvate. Tyrosine 131 functions as the Proton donor/acceptor in the catalytic mechanism. Residue lysine 160 is the Schiff-base intermediate with substrate of the active site. Isoleucine 200 contacts pyruvate.

The protein belongs to the DapA family. In terms of assembly, homotetramer; dimer of dimers.

The protein resides in the cytoplasm. The enzyme catalyses L-aspartate 4-semialdehyde + pyruvate = (2S,4S)-4-hydroxy-2,3,4,5-tetrahydrodipicolinate + H2O + H(+). The protein operates within amino-acid biosynthesis; L-lysine biosynthesis via DAP pathway; (S)-tetrahydrodipicolinate from L-aspartate: step 3/4. Its function is as follows. Catalyzes the condensation of (S)-aspartate-beta-semialdehyde [(S)-ASA] and pyruvate to 4-hydroxy-tetrahydrodipicolinate (HTPA). In Methanococcus vannielii (strain ATCC 35089 / DSM 1224 / JCM 13029 / OCM 148 / SB), this protein is 4-hydroxy-tetrahydrodipicolinate synthase.